We begin with the raw amino-acid sequence, 960 residues long: Protein mono-ADP-ribosyltransferase PARP10 (960 aa).

ADP-ribosyl glutamic acid is present on Glu-103. Residues 325–341 (SMGSTSPVDPVESSTEL) are compositionally biased toward polar residues. The interval 325-346 (SMGSTSPVDPVESSTELPEQVG) is disordered. Ser-381 and Ser-388 each carry phosphoserine. The interval 553–576 (SPHGGEDRVPLEMEKEKPGGPGET) is disordered. The span at 555-570 (HGGEDRVPLEMEKEKP) shows a compositional bias: basic and acidic residues. Residues 604 to 621 (LEEEATLQLAIHRSLESQ) carry the Ubiquitin-interacting motif. Ser-617 is modified (phosphoserine). Residues 649–856 (DEDTGGEAQL…CAHGFNRSFC (208 aa)) form a myc binding region. Positions 755–960 (PNLSEQGLKE…TCKNILPGTP (206 aa)) constitute a PARP catalytic domain. The short motif at 780 to 787 (QDVVRAFY) is the PIP-box element. At Glu-831 the chain carries ADP-ribosyl glutamic acid.

This sequence belongs to the ARTD/PARP family. In terms of assembly, interacts with MYC. Interacts with PARP14. Interacts (via-PIP box and ubiquitin-interacting motifs) with PCNA. Post-translationally, stimulated through its phosphorylation by CDK2. Acquires CDK-dependent phosphorylation through late-G1 to S phase, and from prometaphase to cytokinesis in the nucleolar organizing regions. Phosphorylation is suppressed in growth-arrested cells. Auto-mono-ADP-ribosylated on glutamate and lysine residues.

It localises to the cytoplasm. It is found in the nucleus. It carries out the reaction L-lysyl-[protein] + NAD(+) = N(6)-(ADP-D-ribosyl)-L-lysyl-[protein] + nicotinamide + H(+). The catalysed reaction is L-aspartyl-[protein] + NAD(+) = 4-O-(ADP-D-ribosyl)-L-aspartyl-[protein] + nicotinamide. It catalyses the reaction L-glutamyl-[protein] + NAD(+) = 5-O-(ADP-D-ribosyl)-L-glutamyl-[protein] + nicotinamide. Functionally, ADP-ribosyltransferase that mediates mono-ADP-ribosylation of glutamate and aspartate residues on target proteins. In contrast to PARP1 and PARP2, it is not able to mediate poly-ADP-ribosylation. Catalyzes mono-ADP-ribosylation of GSK3B, leading to negatively regulate GSK3B kinase activity. Involved in translesion DNA synthesis in response to DNA damage via its interaction with PCNA. This is Protein mono-ADP-ribosyltransferase PARP10 from Mus musculus (Mouse).